We begin with the raw amino-acid sequence, 236 residues long: Alpha-acetolactate decarboxylase (236 aa).

Belongs to the alpha-acetolactate decarboxylase family.

The enzyme catalyses (2S)-2-acetolactate + H(+) = (R)-acetoin + CO2. It functions in the pathway polyol metabolism; (R,R)-butane-2,3-diol biosynthesis; (R,R)-butane-2,3-diol from pyruvate: step 2/3. Its function is as follows. Converts acetolactate into acetoin. The protein is Alpha-acetolactate decarboxylase (aldB) of Lactococcus lactis subsp. lactis (strain IL1403) (Streptococcus lactis).